The following is a 260-amino-acid chain: Multiple myeloma tumor-associated protein 2 homolog (260 aa).

Positions 1-11 (MFGSNRGGVRG) are enriched in gly residues. A disordered region spans residues 1-21 (MFGSNRGGVRGGQDQFNWEDV). Residues lysine 22, lysine 104, and lysine 113 each participate in a glycyl lysine isopeptide (Lys-Gly) (interchain with G-Cter in SUMO2) cross-link. The segment covering 106–116 (EGGDPEEKGVD) has biased composition (basic and acidic residues). 2 disordered regions span residues 106–133 (EGGD…RVAL) and 146–260 (SVFT…SSDD). The segment covering 117–132 (RLLGLGSASGSAGRVA) has biased composition (low complexity). Phosphoserine occurs at positions 123 and 127. The span at 170-182 (RAEDKVEPDAESH) shows a compositional bias: basic and acidic residues. Basic residues predominate over residues 183–206 (KKSKKEKKKKKKKHKKHKKKKDKE). Serine 215, serine 216, and serine 219 each carry phosphoserine.

This Mus musculus (Mouse) protein is Multiple myeloma tumor-associated protein 2 homolog (Mmtag2).